Reading from the N-terminus, the 217-residue chain is Uridylate kinase (217 aa).

6–10 (KISGR) lines the ATP pocket. Residue Gly38 coordinates UMP. 2 residues coordinate ATP: Gly39 and Arg43. UMP-binding positions include Asp60 and 107-113 (FQPGQST). Residues Asn134, Tyr139, and Asp142 each coordinate ATP.

Belongs to the UMP kinase family. In terms of assembly, homohexamer.

The protein resides in the cytoplasm. It catalyses the reaction UMP + ATP = UDP + ADP. Its pathway is pyrimidine metabolism; CTP biosynthesis via de novo pathway; UDP from UMP (UMPK route): step 1/1. With respect to regulation, inhibited by UTP. Catalyzes the reversible phosphorylation of UMP to UDP. The chain is Uridylate kinase from Pyrobaculum arsenaticum (strain DSM 13514 / JCM 11321 / PZ6).